We begin with the raw amino-acid sequence, 376 residues long: DNA polymerase IV (376 aa).

The UmuC domain occupies isoleucine 6 to glycine 187. Mg(2+) contacts are provided by aspartate 10 and aspartate 105. Glutamate 106 is a catalytic residue.

The protein belongs to the DNA polymerase type-Y family. Monomer. Mg(2+) is required as a cofactor.

The protein localises to the cytoplasm. The enzyme catalyses DNA(n) + a 2'-deoxyribonucleoside 5'-triphosphate = DNA(n+1) + diphosphate. In terms of biological role, poorly processive, error-prone DNA polymerase involved in untargeted mutagenesis. Copies undamaged DNA at stalled replication forks, which arise in vivo from mismatched or misaligned primer ends. These misaligned primers can be extended by PolIV. Exhibits no 3'-5' exonuclease (proofreading) activity. May be involved in translesional synthesis, in conjunction with the beta clamp from PolIII. This is DNA polymerase IV from Desulfotalea psychrophila (strain LSv54 / DSM 12343).